A 736-amino-acid polypeptide reads, in one-letter code: MFNEILKKVDWHGNMLSLSTGKIARNADGAVLASMGNTSVLCTVVFDKNTKKDIDFFPLGVYYREMAYAAGKIPGGFIKKEGKFSEYEVLVSRLIDRSIRPLFDSNFRNDTQVICTVMSYDPRYSPDILAIIGSSAALAISGIPIVKPIGAARVGIVNDEFILNPVIHDNTGVNELDLVVAATFDSVTMIEAQACEIDEEKMLAAIEFGYKSLKPVINAIEEIKSSIRKDIFEVTARPHLRYNDEILKHFSSDIKSALLLQTKNERNQQLQLIQQKVVDYFSSEANDDDAILNIEKALDDVKSKIFRDLVLQDKTRIGNRAIDEIRPIICEAGLFNTVHGSALFTRGDTQSLATITLGSSTDEQIVEQLNKCERQNFLLDYIFLPYSVGEISPLRAASRREIGHGWLAKKAIQLVIPSKDVFPYTIRIVSEITQSDGSSSMATVCSASLSLMEAGVPIKTHVAGIAMGLVLGEGNKFEILSDISGCEDHLGDMDFKVASTKNGITALQLDIKVQGINLSMIESTFRQAKIGINHILNVMNNTISCPKSELSTYAPMVQTLEIQKEKIRDVIGLGGKVIKELCKTFDVEIDISENGEVKVWGNVGENVKKAVQSIENIVFVPQIGDIFDGEVVKVIESGAFIKYVTGRDGFVHISEINDTHIKDINAHVKLGDKVKVKIIGIDHKNRVKLTLRTDKEHCKNKNEQYNDITTTTGSVKKKIKIAPKEAAVISNRKYFD.

Asp-488 and Asp-494 together coordinate Mg(2+). The 60-residue stretch at 555–614 (PMVQTLEIQKEKIRDVIGLGGKVIKELCKTFDVEIDISENGEVKVWGNVGENVKKAVQSI) folds into the KH domain. Positions 624–692 (GDIFDGEVVK…HKNRVKLTLR (69 aa)) constitute an S1 motif domain.

It belongs to the polyribonucleotide nucleotidyltransferase family. Mg(2+) serves as cofactor.

The protein resides in the cytoplasm. It carries out the reaction RNA(n+1) + phosphate = RNA(n) + a ribonucleoside 5'-diphosphate. Functionally, involved in mRNA degradation. Catalyzes the phosphorolysis of single-stranded polyribonucleotides processively in the 3'- to 5'-direction. The polypeptide is Polyribonucleotide nucleotidyltransferase (Orientia tsutsugamushi (strain Ikeda) (Rickettsia tsutsugamushi)).